The primary structure comprises 521 residues: Bifunctional purine biosynthesis protein PurH (521 aa).

The 147-residue stretch at 1 to 147 folds into the MGS-like domain; sequence MAKITRALIS…KNNADVTVLV (147 aa).

This sequence belongs to the PurH family.

The catalysed reaction is (6R)-10-formyltetrahydrofolate + 5-amino-1-(5-phospho-beta-D-ribosyl)imidazole-4-carboxamide = 5-formamido-1-(5-phospho-D-ribosyl)imidazole-4-carboxamide + (6S)-5,6,7,8-tetrahydrofolate. It catalyses the reaction IMP + H2O = 5-formamido-1-(5-phospho-D-ribosyl)imidazole-4-carboxamide. It participates in purine metabolism; IMP biosynthesis via de novo pathway; 5-formamido-1-(5-phospho-D-ribosyl)imidazole-4-carboxamide from 5-amino-1-(5-phospho-D-ribosyl)imidazole-4-carboxamide (10-formyl THF route): step 1/1. Its pathway is purine metabolism; IMP biosynthesis via de novo pathway; IMP from 5-formamido-1-(5-phospho-D-ribosyl)imidazole-4-carboxamide: step 1/1. This chain is Bifunctional purine biosynthesis protein PurH, found in Geobacter sulfurreducens (strain ATCC 51573 / DSM 12127 / PCA).